Here is an 82-residue protein sequence, read N- to C-terminus: ATP synthase subunit c (82 aa).

2 consecutive transmembrane segments (helical) span residues 5–25 (IASA…IGPG) and 57–77 (LAFM…LLFA).

It belongs to the ATPase C chain family. In terms of assembly, F-type ATPases have 2 components, F(1) - the catalytic core - and F(0) - the membrane proton channel. F(1) has five subunits: alpha(3), beta(3), gamma(1), delta(1), epsilon(1). F(0) has four main subunits: a(1), b(1), b'(1) and c(10-14). The alpha and beta chains form an alternating ring which encloses part of the gamma chain. F(1) is attached to F(0) by a central stalk formed by the gamma and epsilon chains, while a peripheral stalk is formed by the delta, b and b' chains.

The protein resides in the cellular thylakoid membrane. F(1)F(0) ATP synthase produces ATP from ADP in the presence of a proton or sodium gradient. F-type ATPases consist of two structural domains, F(1) containing the extramembraneous catalytic core and F(0) containing the membrane proton channel, linked together by a central stalk and a peripheral stalk. During catalysis, ATP synthesis in the catalytic domain of F(1) is coupled via a rotary mechanism of the central stalk subunits to proton translocation. In terms of biological role, key component of the F(0) channel; it plays a direct role in translocation across the membrane. A homomeric c-ring of between 10-14 subunits forms the central stalk rotor element with the F(1) delta and epsilon subunits. This Cyanothece sp. (strain PCC 7425 / ATCC 29141) protein is ATP synthase subunit c.